The primary structure comprises 588 residues: Histone-arginine methyltransferase CARM1 (588 aa).

An SAM-dependent MTase PRMT-type domain is found at alanine 120 to valine 427. S-adenosyl-L-methionine-binding residues include glutamine 133, arginine 142, glycine 166, glutamate 188, glutamate 217, and serine 245. A transactivation domain region spans residues threonine 473 to serine 588.

It belongs to the class I-like SAM-binding methyltransferase superfamily. Protein arginine N-methyltransferase family. In terms of assembly, homodimer.

Its subcellular location is the nucleus. It localises to the cytoplasm. The protein resides in the chromosome. It catalyses the reaction L-arginyl-[protein] + 2 S-adenosyl-L-methionine = N(omega),N(omega)-dimethyl-L-arginyl-[protein] + 2 S-adenosyl-L-homocysteine + 2 H(+). Functionally, methylates (mono- and asymmetric dimethylation) the guanidino nitrogens of arginyl residues in several proteins involved in DNA packaging, transcription regulation, pre-mRNA splicing, and mRNA stability. Recruited to promoters upon gene activation together with histone acetyltransferases from EP300/P300 and p160 families, methylates histone H3 at 'Arg-17' (H3R17me) and activates transcription via chromatin remodeling. This Danio rerio (Zebrafish) protein is Histone-arginine methyltransferase CARM1 (carm1).